A 183-amino-acid polypeptide reads, in one-letter code: Ribosomal RNA small subunit methyltransferase G (183 aa).

Residues Gly-60, Phe-65, 111 to 112, and Arg-125 each bind S-adenosyl-L-methionine; that span reads IE.

The protein belongs to the methyltransferase superfamily. RNA methyltransferase RsmG family.

The protein resides in the cytoplasm. The enzyme catalyses guanosine(527) in 16S rRNA + S-adenosyl-L-methionine = N(7)-methylguanosine(527) in 16S rRNA + S-adenosyl-L-homocysteine. In terms of biological role, specifically methylates the N7 position of guanine in position 527 of 16S rRNA. The sequence is that of Ribosomal RNA small subunit methyltransferase G from Campylobacter hominis (strain ATCC BAA-381 / DSM 21671 / CCUG 45161 / LMG 19568 / NCTC 13146 / CH001A).